A 211-amino-acid polypeptide reads, in one-letter code: Large ribosomal subunit protein uL4 (211 aa).

The segment at 52 to 79 (GRAEVHGSNSKPYSQKGTGRARRGDKKS) is disordered. Over residues 58 to 68 (GSNSKPYSQKG) the composition is skewed to polar residues.

Belongs to the universal ribosomal protein uL4 family. Part of the 50S ribosomal subunit.

Functionally, one of the primary rRNA binding proteins, this protein initially binds near the 5'-end of the 23S rRNA. It is important during the early stages of 50S assembly. It makes multiple contacts with different domains of the 23S rRNA in the assembled 50S subunit and ribosome. In terms of biological role, forms part of the polypeptide exit tunnel. This Treponema denticola (strain ATCC 35405 / DSM 14222 / CIP 103919 / JCM 8153 / KCTC 15104) protein is Large ribosomal subunit protein uL4.